Reading from the N-terminus, the 132-residue chain is MQFERSDRVSEEIKKELSDIIQHDLKDPRLCAELISIVKVNMSKDLRHAKVYVSIFDKDKEKVETTMKALENAKPYIRREISRRISLRFTPEITFELDDSIEYGARISQILNQLNIPKEDENIEESEGEEEN.

The protein belongs to the RbfA family. In terms of assembly, monomer. Binds 30S ribosomal subunits, but not 50S ribosomal subunits or 70S ribosomes.

It is found in the cytoplasm. One of several proteins that assist in the late maturation steps of the functional core of the 30S ribosomal subunit. Associates with free 30S ribosomal subunits (but not with 30S subunits that are part of 70S ribosomes or polysomes). Required for efficient processing of 16S rRNA. May interact with the 5'-terminal helix region of 16S rRNA. This chain is Ribosome-binding factor A, found in Caldicellulosiruptor bescii (strain ATCC BAA-1888 / DSM 6725 / KCTC 15123 / Z-1320) (Anaerocellum thermophilum).